A 1303-amino-acid polypeptide reads, in one-letter code: DNA-directed RNA polymerase subunit beta (1303 aa).

Belongs to the RNA polymerase beta chain family. As to quaternary structure, the RNAP catalytic core consists of 2 alpha, 1 beta, 1 beta' and 1 omega subunit. When a sigma factor is associated with the core the holoenzyme is formed, which can initiate transcription.

It catalyses the reaction RNA(n) + a ribonucleoside 5'-triphosphate = RNA(n+1) + diphosphate. Its function is as follows. DNA-dependent RNA polymerase catalyzes the transcription of DNA into RNA using the four ribonucleoside triphosphates as substrates. In Chlorobaculum tepidum (strain ATCC 49652 / DSM 12025 / NBRC 103806 / TLS) (Chlorobium tepidum), this protein is DNA-directed RNA polymerase subunit beta.